The sequence spans 872 residues: Alanine--tRNA ligase (872 aa).

Residues H567, H571, C669, and H673 each contribute to the Zn(2+) site.

This sequence belongs to the class-II aminoacyl-tRNA synthetase family. Zn(2+) is required as a cofactor.

It localises to the cytoplasm. The catalysed reaction is tRNA(Ala) + L-alanine + ATP = L-alanyl-tRNA(Ala) + AMP + diphosphate. In terms of biological role, catalyzes the attachment of alanine to tRNA(Ala) in a two-step reaction: alanine is first activated by ATP to form Ala-AMP and then transferred to the acceptor end of tRNA(Ala). Also edits incorrectly charged Ser-tRNA(Ala) and Gly-tRNA(Ala) via its editing domain. The sequence is that of Alanine--tRNA ligase from Streptococcus pyogenes serotype M5 (strain Manfredo).